The sequence spans 338 residues: MTDRYILAVESSCDETSVAVLKNDNVLLTNIIASQVESHKRFGGVVPEVASRHHVEVITTCFDDALKEAQLEASDLTAVAVTYGPGLVGALLVGLAAAKAFAWANDLPLIPVNHMAGHLMAAREQGELEYPLMALLVSGGHTELVYVTEPGEYHIVGETRDDAVGEAYDKVGRVMGLPYPAGREIDQLAHQGTDTYHFPRAMMKEDHLEFSFSGLQSAFINLHHNAQQKGEELVLEDLCASFQAAVLDILLAKTKKALKQYPSKMLVVAGGVAANQGLRERLAKEITDLAVVIPPLRLCGDNAGMIALAAAVEYDKGHVADLDLNAKPSLAFESFHQQ.

The Fe cation site is built by H114 and H118. Substrate-binding positions include 136 to 140, D169, G182, D186, and N275; that span reads LVSGG. D301 contacts Fe cation.

The protein belongs to the KAE1 / TsaD family. The cofactor is Fe(2+).

Its subcellular location is the cytoplasm. The catalysed reaction is L-threonylcarbamoyladenylate + adenosine(37) in tRNA = N(6)-L-threonylcarbamoyladenosine(37) in tRNA + AMP + H(+). Required for the formation of a threonylcarbamoyl group on adenosine at position 37 (t(6)A37) in tRNAs that read codons beginning with adenine. Is involved in the transfer of the threonylcarbamoyl moiety of threonylcarbamoyl-AMP (TC-AMP) to the N6 group of A37, together with TsaE and TsaB. TsaD likely plays a direct catalytic role in this reaction. The chain is tRNA N6-adenosine threonylcarbamoyltransferase from Streptococcus equi subsp. zooepidemicus (strain MGCS10565).